A 593-amino-acid polypeptide reads, in one-letter code: Elongation factor 4 (593 aa).

The tr-type G domain occupies 2–181; the sequence is KNIRNFCIIA…AVVERIPHPT (180 aa). Residues 14–19 and 128–131 each bind GTP; these read DHGKST and NKCD.

This sequence belongs to the TRAFAC class translation factor GTPase superfamily. Classic translation factor GTPase family. LepA subfamily.

It localises to the cell inner membrane. It carries out the reaction GTP + H2O = GDP + phosphate + H(+). Functionally, required for accurate and efficient protein synthesis under certain stress conditions. May act as a fidelity factor of the translation reaction, by catalyzing a one-codon backward translocation of tRNAs on improperly translocated ribosomes. Back-translocation proceeds from a post-translocation (POST) complex to a pre-translocation (PRE) complex, thus giving elongation factor G a second chance to translocate the tRNAs correctly. Binds to ribosomes in a GTP-dependent manner. The sequence is that of Elongation factor 4 from Phocaeicola vulgatus (strain ATCC 8482 / DSM 1447 / JCM 5826 / CCUG 4940 / NBRC 14291 / NCTC 11154) (Bacteroides vulgatus).